The chain runs to 282 residues: MQEFQSIPGLAGRLFGGAAAADIRRAQAQQGPASRCGGIPSPEAVKCPRCESTNTKFCYYNNYNLSQPRHFCKSCRRYWTKGGVLRNVPVGGGCRKTKRSGSSSAASSAPSTPTAATDNAKNQRRASASSPRSSSGGSGNTSPTAAAATTPTTPATPSSNTIAVINHATTTTTTTNPFPTDVPPPAPIFADQAAALASLFAPPPPPPLPVFSFAAQAKTEDGIASVLLAGQTTAPTAATVADMTPFTSLDAGIFELGDVPPAAYWNAGSCWTDVPDPNVYLP.

Residues valine 45–arginine 99 form a Dof-type zinc finger. Cysteine 47, cysteine 50, cysteine 72, and cysteine 75 together coordinate Zn(2+). Residues proline 89–threonine 161 are disordered. Low complexity-rich tracts occupy residues serine 102–threonine 117 and arginine 125–threonine 161.

The protein resides in the nucleus. In terms of biological role, transcription factor that may transactivate seed storage protein genes in developing seeds. The chain is Dof zinc finger protein 4 from Oryza sativa subsp. japonica (Rice).